The chain runs to 103 residues: Large ribosomal subunit protein bL21 (103 aa).

This sequence belongs to the bacterial ribosomal protein bL21 family. In terms of assembly, part of the 50S ribosomal subunit. Contacts protein L20.

In terms of biological role, this protein binds to 23S rRNA in the presence of protein L20. The polypeptide is Large ribosomal subunit protein bL21 (Psychromonas ingrahamii (strain DSM 17664 / CCUG 51855 / 37)).